The chain runs to 149 residues: Cell division protein SepF (149 aa).

This sequence belongs to the SepF family. Homodimer. Interacts with FtsZ.

The protein localises to the cytoplasm. Cell division protein that is part of the divisome complex and is recruited early to the Z-ring. Probably stimulates Z-ring formation, perhaps through the cross-linking of FtsZ protofilaments. Its function overlaps with FtsA. The sequence is that of Cell division protein SepF from Clostridium perfringens (strain ATCC 13124 / DSM 756 / JCM 1290 / NCIMB 6125 / NCTC 8237 / Type A).